Reading from the N-terminus, the 307-residue chain is MTRHFLRDDDLTPEEQAEVLALAAALKKDPFSRRPLEGPRGVAVIFEKNSTRTRFSFEMGIAQLGGHAVVVDGRSTQLGREETLEDTGAVLSRYVDAIVWRTFAQERLTAMASGASVPIVNALSDEFHPCQVLADLQTLIERKGSLKGLRLAYFGDGANNMAHSLMLGGVTAGVDVTIAAPRGFEPHPMFIAAAETRAHQTGATVAVIDDPLRAADGADVLVTDTWTSMGQENDGLDRVRPFRPFQVNADLLGRADSEAVVLHCLPAHRGHEITDEVIDGPRSAVWDEAENRLHAQKALLVWLLERS.

Carbamoyl phosphate is bound by residues Ser50 to Thr53, Gln77, Arg101, and His128 to Gln131. L-ornithine contacts are provided by residues Asn160, Asp224, and Ser228 to Met229. Carbamoyl phosphate contacts are provided by residues Cys264–Leu265 and Arg292.

This sequence belongs to the aspartate/ornithine carbamoyltransferase superfamily. OTCase family.

It is found in the cytoplasm. The enzyme catalyses carbamoyl phosphate + L-ornithine = L-citrulline + phosphate + H(+). The protein operates within amino-acid biosynthesis; L-arginine biosynthesis; L-arginine from L-ornithine and carbamoyl phosphate: step 1/3. Functionally, reversibly catalyzes the transfer of the carbamoyl group from carbamoyl phosphate (CP) to the N(epsilon) atom of ornithine (ORN) to produce L-citrulline. This Mycolicibacterium gilvum (strain PYR-GCK) (Mycobacterium gilvum (strain PYR-GCK)) protein is Ornithine carbamoyltransferase.